We begin with the raw amino-acid sequence, 155 residues long: Ribosomal RNA large subunit methyltransferase H (155 aa).

Residues Leu72, Gly103, and 122 to 127 (LSPLTL) each bind S-adenosyl-L-methionine.

Belongs to the RNA methyltransferase RlmH family. Homodimer.

It localises to the cytoplasm. The enzyme catalyses pseudouridine(1915) in 23S rRNA + S-adenosyl-L-methionine = N(3)-methylpseudouridine(1915) in 23S rRNA + S-adenosyl-L-homocysteine + H(+). In terms of biological role, specifically methylates the pseudouridine at position 1915 (m3Psi1915) in 23S rRNA. This is Ribosomal RNA large subunit methyltransferase H from Mannheimia succiniciproducens (strain KCTC 0769BP / MBEL55E).